We begin with the raw amino-acid sequence, 648 residues long: NADP-dependent malic enzyme, chloroplastic (648 aa).

A chloroplast-targeting transit peptide spans 1–61 (MISLNSSFLE…VDSAVRDVNA (61 aa)). The Proton donor role is filled by Y195. R248 contacts NAD(+). K266 serves as the catalytic Proton acceptor. Residues E339, D340, and D363 each coordinate a divalent metal cation. D363 contacts NAD(+). Position 392–408 (392–408 (LFLGAGEAGTGIAELIA)) interacts with NADP(+). N504 is a binding site for NAD(+).

Belongs to the malic enzymes family. As to quaternary structure, homotetramer. The cofactor is Mg(2+). Requires Mn(2+) as cofactor.

The protein localises to the plastid. It localises to the chloroplast. It carries out the reaction (S)-malate + NADP(+) = pyruvate + CO2 + NADPH. It catalyses the reaction oxaloacetate + H(+) = pyruvate + CO2. It functions in the pathway photosynthesis; C4 acid pathway. Functionally, the chloroplastic ME isoform decarboxylates malate shuttled from neighboring mesophyll cells. The CO(2) released is then refixed by ribulose-bisphosphate carboxylase. This pathway eliminates the photorespiratory loss of CO(2) that occurs in most plants. This Flaveria trinervia (Clustered yellowtops) protein is NADP-dependent malic enzyme, chloroplastic (MOD1).